Here is a 272-residue protein sequence, read N- to C-terminus: Phosphatidylglycerol--prolipoprotein diacylglyceryl transferase (272 aa).

Transmembrane regions (helical) follow at residues 21-41 (IAVH…IFVA), 60-80 (YIWW…VLFY), 101-121 (GVYA…FIIA), and 131-151 (VSFW…YIFG). Arg152 contacts a 1,2-diacyl-sn-glycero-3-phospho-(1'-sn-glycerol). 3 helical membrane-spanning segments follow: residues 181–201 (PSQI…LAFY), 209–229 (GQLA…AEFF), and 244–264 (LTMG…FYVV).

It belongs to the Lgt family.

The protein localises to the cell inner membrane. It catalyses the reaction L-cysteinyl-[prolipoprotein] + a 1,2-diacyl-sn-glycero-3-phospho-(1'-sn-glycerol) = an S-1,2-diacyl-sn-glyceryl-L-cysteinyl-[prolipoprotein] + sn-glycerol 1-phosphate + H(+). It functions in the pathway protein modification; lipoprotein biosynthesis (diacylglyceryl transfer). Functionally, catalyzes the transfer of the diacylglyceryl group from phosphatidylglycerol to the sulfhydryl group of the N-terminal cysteine of a prolipoprotein, the first step in the formation of mature lipoproteins. This is Phosphatidylglycerol--prolipoprotein diacylglyceryl transferase from Aliarcobacter butzleri (strain RM4018) (Arcobacter butzleri).